A 146-amino-acid polypeptide reads, in one-letter code: Protein JTB (146 aa).

A signal peptide spans 1–30; that stretch reads MLAGAGRPGLPQGRHLCWLLCAFTLKLCQA. The Extracellular portion of the chain corresponds to 31-105; the sequence is EAPVQEEKLS…CRSALMEQRL (75 aa). The helical transmembrane segment at 106-126 threads the bilayer; it reads FWKFEGAVVCVALIFACLVII. The Cytoplasmic portion of the chain corresponds to 127 to 146; the sequence is RQRQLDRKALEKVRKQIESI.

The protein belongs to the JTB family. Interacts with AURKA, AURKB, BIRC5 and INCENP. May be a component of the CPC at least composed of BIRC5/survivin, CDCA8/borealin, INCENP and AURKB/Aurora-B. In terms of tissue distribution, ubiquitous. Expressed in all normal human tissues studied but overexpressed or underexpressed in many of their malignant counterparts.

It is found in the membrane. The protein resides in the mitochondrion. The protein localises to the cytoplasm. Its subcellular location is the cytoskeleton. It localises to the microtubule organizing center. It is found in the centrosome. The protein resides in the spindle. Its function is as follows. Required for normal cytokinesis during mitosis. Plays a role in the regulation of cell proliferation. May be a component of the chromosomal passenger complex (CPC), a complex that acts as a key regulator of mitosis. The CPC complex has essential functions at the centromere in ensuring correct chromosome alignment and segregation and is required for chromatin-induced microtubule stabilization and spindle assembly. Increases AURKB activity. Inhibits apoptosis induced by TGFB1. Overexpression induces swelling of mitochondria and reduces mitochondrial membrane potential. The chain is Protein JTB (JTB) from Homo sapiens (Human).